Here is an 89-residue protein sequence, read N- to C-terminus: UPF0367 protein PMM0124 (89 aa).

Belongs to the UPF0367 family.

This is UPF0367 protein PMM0124 from Prochlorococcus marinus subsp. pastoris (strain CCMP1986 / NIES-2087 / MED4).